The following is a 605-amino-acid chain: Translation factor GUF1 homolog, chloroplastic (605 aa).

The tr-type G domain occupies Arg7–Arg189. GTP contacts are provided by residues Ala16–Ser23, Asp82–His86, and Asn136–Asp139.

This sequence belongs to the TRAFAC class translation factor GTPase superfamily. Classic translation factor GTPase family. LepA subfamily.

The protein resides in the plastid. It is found in the chloroplast. The catalysed reaction is GTP + H2O = GDP + phosphate + H(+). Its function is as follows. Promotes chloroplast protein synthesis. May act as a fidelity factor of the translation reaction, by catalyzing a one-codon backward translocation of tRNAs on improperly translocated ribosomes. The polypeptide is Translation factor GUF1 homolog, chloroplastic (Ostreococcus lucimarinus (strain CCE9901)).